Here is a 213-residue protein sequence, read N- to C-terminus: Redox-sensing transcriptional repressor Rex (213 aa).

Residues 18-57 constitute a DNA-binding region (H-T-H motif); that stretch reads LYYRFLKNLHASGKQRVSSAELSEAVKVDPATIRRDFSYF. 92-97 lines the NAD(+) pocket; sequence GVGNLG.

This sequence belongs to the transcriptional regulatory Rex family. Homodimer.

It is found in the cytoplasm. In terms of biological role, modulates transcription in response to changes in cellular NADH/NAD(+) redox state. This is Redox-sensing transcriptional repressor Rex from Geobacillus kaustophilus (strain HTA426).